Reading from the N-terminus, the 548-residue chain is Luciferin 4-monooxygenase (548 aa).

Positions 546–548 (AKM) match the Microbody targeting signal motif.

The protein belongs to the ATP-dependent AMP-binding enzyme family. Homodimer. Mg(2+) serves as cofactor.

It is found in the peroxisome. The enzyme catalyses firefly D-luciferin + ATP + O2 = firefly oxyluciferin + hnu + AMP + CO2 + diphosphate. Inhibited by ATP analogs and sodium deoxycholate. Activated by choline-containing phospholipids. Produces green light with a wavelength of 570 nm. The protein is Luciferin 4-monooxygenase of Luciola mingrelica (Southern Russian firefly).